A 339-amino-acid polypeptide reads, in one-letter code: Aspartate carbamoyltransferase catalytic subunit (339 aa).

R59 and T60 together coordinate carbamoyl phosphate. Position 87 (K87) interacts with L-aspartate. Carbamoyl phosphate contacts are provided by R109, H142, and Q145. R182 and R253 together coordinate L-aspartate. Residues G294 and P295 each contribute to the carbamoyl phosphate site.

Belongs to the aspartate/ornithine carbamoyltransferase superfamily. ATCase family. In terms of assembly, heterododecamer (2C3:3R2) of six catalytic PyrB chains organized as two trimers (C3), and six regulatory PyrI chains organized as three dimers (R2).

The catalysed reaction is carbamoyl phosphate + L-aspartate = N-carbamoyl-L-aspartate + phosphate + H(+). It functions in the pathway pyrimidine metabolism; UMP biosynthesis via de novo pathway; (S)-dihydroorotate from bicarbonate: step 2/3. Its function is as follows. Catalyzes the condensation of carbamoyl phosphate and aspartate to form carbamoyl aspartate and inorganic phosphate, the committed step in the de novo pyrimidine nucleotide biosynthesis pathway. The protein is Aspartate carbamoyltransferase catalytic subunit of Prochlorococcus marinus (strain NATL1A).